Consider the following 32-residue polypeptide: ilv operon leader peptide (32 aa).

The polypeptide is ilv operon leader peptide (ilvL) (Edwardsiella tarda).